The following is a 466-amino-acid chain: Argininosuccinate lyase (466 aa).

The protein belongs to the lyase 1 family. Argininosuccinate lyase subfamily.

The protein localises to the cytoplasm. The enzyme catalyses 2-(N(omega)-L-arginino)succinate = fumarate + L-arginine. Its pathway is amino-acid biosynthesis; L-arginine biosynthesis; L-arginine from L-ornithine and carbamoyl phosphate: step 3/3. The polypeptide is Argininosuccinate lyase (Brucella anthropi (strain ATCC 49188 / DSM 6882 / CCUG 24695 / JCM 21032 / LMG 3331 / NBRC 15819 / NCTC 12168 / Alc 37) (Ochrobactrum anthropi)).